Consider the following 727-residue polypeptide: Transcription activator of gluconeogenesis TRV_01442 (727 aa).

Over residues 1 to 32 the composition is skewed to polar residues; the sequence is MSPHQTTGQESDNMTVNGENAQASSQYIQSNE. Positions 1–62 are disordered; sequence MSPHQTTGQE…PSRPKRKKAK (62 aa). The segment covering 39–55 has biased composition (basic and acidic residues); sequence ATEKKASAAKAAKDPSR. The zn(2)-C6 fungal-type DNA-binding region spans 65-93; the sequence is CYACQRGHLTCGDERPCQRCIKRGFQDAC. Polar residues-rich tracts occupy residues 129–213, 267–277, and 361–379; these read NNVN…TPSA, PSDSGAQRGSI, and MMTT…GAFN. Disordered stretches follow at residues 129-224, 264-297, 353-399, 533-567, and 627-666; these read NNVN…FNST, DTPP…ESPS, SPAS…STPQ, NHNV…YNSS, and GSNG…QRRW. Low complexity-rich tracts occupy residues 380–399 and 543–553; these read SRQN…STPQ and GLMTGSTSRGS. Residues 639 to 661 show a composition bias toward polar residues; sequence EATSNETNELNGSHTNGATTNGR.

Belongs to the ERT1/acuK family.

It localises to the nucleus. Functionally, transcription factor which regulates nonfermentable carbon utilization. Activator of gluconeogenetic genes. This Trichophyton verrucosum (strain HKI 0517) protein is Transcription activator of gluconeogenesis TRV_01442.